The chain runs to 371 residues: Germination protease (371 aa).

Residues 1-16 (MEKQKLDLSAYQIRTD) constitute a propeptide that is removed on maturation.

Belongs to the peptidase A25 family. As to quaternary structure, homotetramer. In terms of processing, autoproteolytically processed. The inactive tetrameric zymogen termed p46 autoprocesses to a smaller form termed p41, which is active only during spore germination.

The enzyme catalyses Endopeptidase action with P4 Glu or Asp, P1 preferably Glu &gt; Asp, P1' hydrophobic and P2' Ala.. Functionally, initiates the rapid degradation of small, acid-soluble proteins during spore germination. The sequence is that of Germination protease from Bacillus pumilus (strain SAFR-032).